A 142-amino-acid polypeptide reads, in one-letter code: Protein spalt-accessory (142 aa).

The N-terminal stretch at 1–16 (MKLLIALFALVTAVNA) is a signal peptide. The disordered stretch occupies residues 75-142 (GFAGQGSPNQ…HHEHHGHHRH (68 aa)). The segment covering 107–124 (GHFHENPHEYPEHHGDHH) has biased composition (basic and acidic residues). The segment covering 125 to 142 (REHHEHHGHHEHHGHHRH) has biased composition (basic residues).

It localises to the secreted. Its function is as follows. Likely to be involved in the establishment of the head. This is Protein spalt-accessory (sala) from Drosophila melanogaster (Fruit fly).